The sequence spans 401 residues: Imidazolonepropionase (401 aa).

Fe(3+) is bound by residues His-66 and His-68. Zn(2+)-binding residues include His-66 and His-68. 3 residues coordinate 4-imidazolone-5-propanoate: Arg-75, Tyr-138, and His-171. An N-formimidoyl-L-glutamate-binding site is contributed by Tyr-138. A Fe(3+)-binding site is contributed by His-236. His-236 provides a ligand contact to Zn(2+). A 4-imidazolone-5-propanoate-binding site is contributed by Gln-239. Asp-311 contacts Fe(3+). A Zn(2+)-binding site is contributed by Asp-311. Residues Asn-313 and Gly-315 each coordinate N-formimidoyl-L-glutamate. Thr-316 lines the 4-imidazolone-5-propanoate pocket.

It belongs to the metallo-dependent hydrolases superfamily. HutI family. The cofactor is Zn(2+). Fe(3+) serves as cofactor.

It is found in the cytoplasm. It catalyses the reaction 4-imidazolone-5-propanoate + H2O = N-formimidoyl-L-glutamate. It functions in the pathway amino-acid degradation; L-histidine degradation into L-glutamate; N-formimidoyl-L-glutamate from L-histidine: step 3/3. Catalyzes the hydrolytic cleavage of the carbon-nitrogen bond in imidazolone-5-propanoate to yield N-formimidoyl-L-glutamate. It is the third step in the universal histidine degradation pathway. This Acinetobacter baumannii (strain AB307-0294) protein is Imidazolonepropionase.